A 302-amino-acid polypeptide reads, in one-letter code: MDQLTRKNRLEFNKLQKRLRRHVGRAIADYNMIEEGDRVMVCLSGGKDSYGMLDILLSLQRTAPVKFELVAVNLDQKQPGFPEHVLPAYLDTLDIEYHIVERDTYSIVKSVVPEGKTTCGLCSRLRRGTLYGFAEKIGATKIALGHHRDDIVETLFLNLFYAGRLKAMPPKLRSDDKRNIIIRPLAYCPEEDLEAFAQARAFPIIPCNLCGSQENLQRQVIKEMLRGWDKQFPGRVETIFAALQRVSPSQLADNALFNFTDLTLDRSAPAAIEDDAPLSWSDLATTEDTTDAVNIINAVNIG.

The PP-loop motif motif lies at 44-49 (SGGKDS). 3 residues coordinate [4Fe-4S] cluster: cysteine 119, cysteine 122, and cysteine 210.

The protein belongs to the TtcA family. As to quaternary structure, homodimer. Mg(2+) serves as cofactor. Requires [4Fe-4S] cluster as cofactor.

It localises to the cytoplasm. The enzyme catalyses cytidine(32) in tRNA + S-sulfanyl-L-cysteinyl-[cysteine desulfurase] + AH2 + ATP = 2-thiocytidine(32) in tRNA + L-cysteinyl-[cysteine desulfurase] + A + AMP + diphosphate + H(+). Its pathway is tRNA modification. Functionally, catalyzes the ATP-dependent 2-thiolation of cytidine in position 32 of tRNA, to form 2-thiocytidine (s(2)C32). The sulfur atoms are provided by the cysteine/cysteine desulfurase (IscS) system. The protein is tRNA-cytidine(32) 2-sulfurtransferase of Teredinibacter turnerae (strain ATCC 39867 / T7901).